The primary structure comprises 401 residues: Phosphoglycerate kinase (401 aa).

Substrate is bound by residues 23-25, arginine 38, 61-64, arginine 120, and arginine 153; these read DLN and HFGR. ATP-binding positions include lysine 203, glutamate 325, and 355 to 358; that span reads GGDT.

Belongs to the phosphoglycerate kinase family. In terms of assembly, monomer.

The protein localises to the cytoplasm. The catalysed reaction is (2R)-3-phosphoglycerate + ATP = (2R)-3-phospho-glyceroyl phosphate + ADP. It functions in the pathway carbohydrate degradation; glycolysis; pyruvate from D-glyceraldehyde 3-phosphate: step 2/5. This chain is Phosphoglycerate kinase, found in Rhizobium johnstonii (strain DSM 114642 / LMG 32736 / 3841) (Rhizobium leguminosarum bv. viciae).